The chain runs to 1382 residues: MEDIFNFFDKPKDPLHFSSIKISISSPDKIRERSFGEVKKPETINYRTFKPERDGLFCAKIFGPTKDYECNCGKYKRMKHRGIVCEKCGVEVIPSKVRRERLGHIDLATPVAHIWFLKSLPSRIGNLMDITLKDLEKVLYFEAYVVTDPKETGLAFGTVFSEDQYQKALEEYSYGFEAGMGAAAIRTCLTSMDLDQLSEQLRIEMQEATSEAKRKKTAKRLKVMEAFKNSGNKPEWMILECIPVLPPELRPLVPLDGGRFATSDLNDLYRRVINRNNRLKRLMELQAPEVIIRNEKRMLQEAVDALFDNGRRGRAIAGPNKRPLKSLSDMLKGKSGRFRQNLLGKRVDYSGRSVIVVGPELRLHQCGLPKKMALELFKPFIYNKLEERGFVTTIKSAKKMVEKEKPEVWDVLEEVIKEHPVLLNRAPTLHRLGIQAFEPVLIEGKAIQLHPLVCTAFNADFDGDQMAVHLPLSVESQVEARVLMMSTNNILSPAHGKPIIVPSQDMVLGIYYMTREKHFALGEGKIFASADEVNIAWDAGEIHLQARIKVRMKNLVSDEKPTLIETTTGRVLLRDILPDAVPYATINKVMTKKELSNLVDVCYRLAGNKETVILADKLKAIGFRYAAKAGISISINDMVIPEGKPAIITRATEEVQEIQNQYTEGLITDGERYNKVIDIWAKSTEDIAKEMLDNLSRDTILDPEGKEVKVPSFNAIHMMADSGARGSAQQIRQLAGMRGLMAKPSGEIIETPITANFREGLTVLQYFISTHGARKGLADTALKTANSGYLTRRLVDVAQDAIITEADCGTIDGLTVSSLTEGGEVIEHIGDRILGRVALDDILDPVTGDVLVPANEEIDENLVARIEAAGLEKVKIRSVLTCESRRGICAKCYGRDLARGHLVNRGEAVGVIAAQSIGEPGTQLTMRTFHIGGTASRRAEQTALEARNEGFAKFININYVTNSEGHHIVMNRNGELAIVDETGREREKYGVVYGAKIKVSPQEKVTQGQSVAEWDPYTMPILTEIAGRVKFGDVIEGVTMEEQVDEVTGLSRKVIIETRDADKRPRITIKDESGKTAKIGDSLLARYYLPVGSNINVLEDTEVNAGDVIAKIPRETTKTKDITGGLPRVAELFEARKPKDFAVITEIDGVVAFGKDAKGKRKVLVTPELGEPKEYLIPKGKHISVHEGDHVRAGEALMDGSSNPHDILRVLGQKELAKYLVDEVQEVYRLQGVKINDKHIETIVRQMLRRVRVKDVGDTNLLIDDQIERWVFEEENEKAMDKGGRPATAESLLLGITKASLSTESFISAASFQETTKVLTQASIEGKIDSLRGLKENVIMGRLIPAGTGLALYRNLRMVAEEPVIIPEPVEPEDEEIYEEEA.

Cys-70, Cys-72, Cys-85, and Cys-88 together coordinate Zn(2+). Mg(2+) is bound by residues Asp-460, Asp-462, and Asp-464. The Zn(2+) site is built by Cys-808, Cys-882, Cys-889, and Cys-892.

Belongs to the RNA polymerase beta' chain family. The RNAP catalytic core consists of 2 alpha, 1 beta, 1 beta' and 1 omega subunit. When a sigma factor is associated with the core the holoenzyme is formed, which can initiate transcription. Mg(2+) serves as cofactor. Zn(2+) is required as a cofactor.

The catalysed reaction is RNA(n) + a ribonucleoside 5'-triphosphate = RNA(n+1) + diphosphate. DNA-dependent RNA polymerase catalyzes the transcription of DNA into RNA using the four ribonucleoside triphosphates as substrates. This is DNA-directed RNA polymerase subunit beta' from Geobacter sp. (strain M21).